The following is a 132-amino-acid chain: Small ribosomal subunit protein uS8 (132 aa).

It belongs to the universal ribosomal protein uS8 family. As to quaternary structure, part of the 30S ribosomal subunit. Contacts proteins S5 and S12.

Its function is as follows. One of the primary rRNA binding proteins, it binds directly to 16S rRNA central domain where it helps coordinate assembly of the platform of the 30S subunit. The protein is Small ribosomal subunit protein uS8 of Clostridium botulinum (strain 657 / Type Ba4).